A 179-amino-acid chain; its full sequence is uncharacterized protein (179 aa).

The signal sequence occupies residues 1–27 (MNKSMIQSGGYVLLAGLILAMSSTLFA). C43 and C83 are oxidised to a cystine.

Belongs to the fimbrial protein family.

The protein resides in the fimbrium. In terms of biological role, part of the yfcOPQRSUV fimbrial operon. Could contribute to adhesion to various surfaces in specific environmental niches. Increases adhesion to eukaryotic T24 bladder epithelial cells in the absence of fim genes. This is an uncharacterized protein from Escherichia coli (strain K12).